We begin with the raw amino-acid sequence, 226 residues long: Ethylene-responsive transcription factor-like protein At4g13040 (226 aa).

2 disordered regions span residues 63-109 (EERS…RKRV) and 195-226 (KKPK…SDKM). The span at 97 to 109 (PPKRRKQHRRKRV) shows a compositional bias: basic residues. A DNA-binding region (AP2/ERF) is located at residues 105–171 (RRKRVHNQEP…REPNFELSEE (67 aa)). Acidic residues predominate over residues 217–226 (EEEEQDSDKM).

It belongs to the AP2/ERF transcription factor family.

It is found in the nucleus. Its function is as follows. Probably acts as a transcriptional activator. Binds to the GCC-box pathogenesis-related promoter element. May be involved in the regulation of gene expression by stress factors and by components of stress signal transduction pathways. This chain is Ethylene-responsive transcription factor-like protein At4g13040, found in Arabidopsis thaliana (Mouse-ear cress).